Reading from the N-terminus, the 131-residue chain is Small ribosomal subunit protein uS8 (131 aa).

Belongs to the universal ribosomal protein uS8 family. As to quaternary structure, part of the 30S ribosomal subunit. Contacts proteins S5 and S12.

In terms of biological role, one of the primary rRNA binding proteins, it binds directly to 16S rRNA central domain where it helps coordinate assembly of the platform of the 30S subunit. This chain is Small ribosomal subunit protein uS8, found in Chlorobium limicola (strain DSM 245 / NBRC 103803 / 6330).